The chain runs to 506 residues: Lysine--tRNA ligase (506 aa).

2 residues coordinate Mg(2+): Glu-416 and Glu-423.

The protein belongs to the class-II aminoacyl-tRNA synthetase family. As to quaternary structure, homodimer. It depends on Mg(2+) as a cofactor.

It is found in the cytoplasm. It carries out the reaction tRNA(Lys) + L-lysine + ATP = L-lysyl-tRNA(Lys) + AMP + diphosphate. This is Lysine--tRNA ligase (lysS) from Xylella fastidiosa (strain 9a5c).